A 275-amino-acid chain; its full sequence is 4-hydroxy-3-methylbut-2-enyl diphosphate reductase (275 aa).

Cys-12 lines the [4Fe-4S] cluster pocket. His-40 and His-70 together coordinate (2E)-4-hydroxy-3-methylbut-2-enyl diphosphate. Residues His-40 and His-70 each contribute to the dimethylallyl diphosphate site. Isopentenyl diphosphate-binding residues include His-40 and His-70. Cys-92 contacts [4Fe-4S] cluster. (2E)-4-hydroxy-3-methylbut-2-enyl diphosphate is bound at residue His-119. A dimethylallyl diphosphate-binding site is contributed by His-119. Residue His-119 coordinates isopentenyl diphosphate. Glu-121 acts as the Proton donor in catalysis. Position 151 (Thr-151) interacts with (2E)-4-hydroxy-3-methylbut-2-enyl diphosphate. Residue Cys-181 participates in [4Fe-4S] cluster binding. The (2E)-4-hydroxy-3-methylbut-2-enyl diphosphate site is built by Ser-209, Ser-210, Asn-211, and Ser-251. Ser-209, Ser-210, Asn-211, and Ser-251 together coordinate dimethylallyl diphosphate. Isopentenyl diphosphate contacts are provided by Ser-209, Ser-210, Asn-211, and Ser-251.

This sequence belongs to the IspH family. [4Fe-4S] cluster is required as a cofactor.

It carries out the reaction isopentenyl diphosphate + 2 oxidized [2Fe-2S]-[ferredoxin] + H2O = (2E)-4-hydroxy-3-methylbut-2-enyl diphosphate + 2 reduced [2Fe-2S]-[ferredoxin] + 2 H(+). The enzyme catalyses dimethylallyl diphosphate + 2 oxidized [2Fe-2S]-[ferredoxin] + H2O = (2E)-4-hydroxy-3-methylbut-2-enyl diphosphate + 2 reduced [2Fe-2S]-[ferredoxin] + 2 H(+). It functions in the pathway isoprenoid biosynthesis; dimethylallyl diphosphate biosynthesis; dimethylallyl diphosphate from (2E)-4-hydroxy-3-methylbutenyl diphosphate: step 1/1. Its pathway is isoprenoid biosynthesis; isopentenyl diphosphate biosynthesis via DXP pathway; isopentenyl diphosphate from 1-deoxy-D-xylulose 5-phosphate: step 6/6. Its function is as follows. Catalyzes the conversion of 1-hydroxy-2-methyl-2-(E)-butenyl 4-diphosphate (HMBPP) into a mixture of isopentenyl diphosphate (IPP) and dimethylallyl diphosphate (DMAPP). Acts in the terminal step of the DOXP/MEP pathway for isoprenoid precursor biosynthesis. The polypeptide is 4-hydroxy-3-methylbut-2-enyl diphosphate reductase (Thermotoga sp. (strain RQ2)).